The sequence spans 189 residues: Peptidyl-tRNA hydrolase (189 aa).

Residue Tyr14 participates in tRNA binding. The Proton acceptor role is filled by His19. Residues Tyr64, Asn66, and Asn112 each coordinate tRNA.

The protein belongs to the PTH family. In terms of assembly, monomer.

The protein resides in the cytoplasm. It catalyses the reaction an N-acyl-L-alpha-aminoacyl-tRNA + H2O = an N-acyl-L-amino acid + a tRNA + H(+). In terms of biological role, hydrolyzes ribosome-free peptidyl-tRNAs (with 1 or more amino acids incorporated), which drop off the ribosome during protein synthesis, or as a result of ribosome stalling. Functionally, catalyzes the release of premature peptidyl moieties from peptidyl-tRNA molecules trapped in stalled 50S ribosomal subunits, and thus maintains levels of free tRNAs and 50S ribosomes. The sequence is that of Peptidyl-tRNA hydrolase from Dehalococcoides mccartyi (strain ATCC BAA-2266 / KCTC 15142 / 195) (Dehalococcoides ethenogenes (strain 195)).